The sequence spans 125 residues: Small ribosomal subunit protein uS13 (125 aa).

Positions 97-125 (PVRGQKTRSNARTRKGPRPSRIKTKKKSS) are disordered. Positions 101–125 (QKTRSNARTRKGPRPSRIKTKKKSS) are enriched in basic residues.

This sequence belongs to the universal ribosomal protein uS13 family. Part of the 30S ribosomal subunit. Forms a loose heterodimer with protein S19. Forms two bridges to the 50S subunit in the 70S ribosome.

In terms of biological role, located at the top of the head of the 30S subunit, it contacts several helices of the 16S rRNA. In the 70S ribosome it contacts the 23S rRNA (bridge B1a) and protein L5 of the 50S subunit (bridge B1b), connecting the 2 subunits; these bridges are implicated in subunit movement. Contacts the tRNAs in the A and P-sites. The protein is Small ribosomal subunit protein uS13 of Thermotoga maritima (strain ATCC 43589 / DSM 3109 / JCM 10099 / NBRC 100826 / MSB8).